Reading from the N-terminus, the 529-residue chain is DTHGLPIERAVEKELSKKKIRKESLPKTEFRKLCREYANRYVNIQKEEFIRLGVLGDWENPYLTMSPEYEATEIRELGKFFEKGLAYRSKKPVYWCIYDKTAEGQAEVEYYEKEDPSIYVKFPLKKEIEGKKAYAVIWTTTPWTLPANLGIMVKEDADYSLVEVEGEVWIVAKELLENFFKNIGKTYTRVLKDVKGRDLVGLEYEHPFVDRDELKGYLSEETLKNMWRIYPSEFVSLDTGTGLVHMAPGHGQEDYTVGKRYNLEPYAPLDDSGRFVEPAPEFIRGVRVFDANKLIIALLKEKGYLVHEARIRHSYPHCWRCKNPVIFRATPQWFIGMDIEYEGKTLSGESLEEIEKVKWIPEYGKNRIKSMVENRPDWCISRQRFWGVPITVFYCENCGEVIKDKEVFERIASLVEKHPGGTDVWFEKSPEEILPEGYKCPKCGGTSFRKEEDILDVWFDSGCSHASVIRPLGFEKADLYLEGSDQHRGWFQASLLESVGSYGEAPYRSVLTHGFIVDEQGRKMSKSLV.

An L-isoleucyl-5'-AMP-binding site is contributed by glutamate 482. The short motif at 523–527 (KMSKS) is the 'KMSKS' region element. ATP is bound at residue lysine 526.

Belongs to the class-I aminoacyl-tRNA synthetase family. IleS type 1 subfamily. Monomer.

Its subcellular location is the cytoplasm. It catalyses the reaction tRNA(Ile) + L-isoleucine + ATP = L-isoleucyl-tRNA(Ile) + AMP + diphosphate. Catalyzes the attachment of isoleucine to tRNA(Ile). As IleRS can inadvertently accommodate and process structurally similar amino acids such as valine, to avoid such errors it has two additional distinct tRNA(Ile)-dependent editing activities. One activity is designated as 'pretransfer' editing and involves the hydrolysis of activated Val-AMP. The other activity is designated 'posttransfer' editing and involves deacylation of mischarged Val-tRNA(Ile). The chain is Isoleucine--tRNA ligase (ileS) from Aquifex pyrophilus.